The primary structure comprises 397 residues: T-box transcription factor TBX19 (397 aa).

Residues 48 to 216 (LWQRFREVTN…YNPFAKAFLD (169 aa)) constitute a DNA-binding region (T-box). The tract at residues 220–248 (RNHPKDAPEAASEGQHMTYSHSPQAPHGC) is disordered.

It is found in the nucleus. In terms of biological role, may be involved in the initial formation of the chordamesoderm. In Gallus gallus (Chicken), this protein is T-box transcription factor TBX19.